A 464-amino-acid chain; its full sequence is Trigger factor (464 aa).

In terms of domain architecture, PPIase FKBP-type spans 162–243; it reads GDFISIDLSA…VGTVKERELP (82 aa). Residues 435-464 are disordered; sequence ELFGNGEAETEEAASTDEAASDSTESEDQK.

Belongs to the FKBP-type PPIase family. Tig subfamily.

It localises to the cytoplasm. It carries out the reaction [protein]-peptidylproline (omega=180) = [protein]-peptidylproline (omega=0). Its function is as follows. Involved in protein export. Acts as a chaperone by maintaining the newly synthesized protein in an open conformation. Functions as a peptidyl-prolyl cis-trans isomerase. This chain is Trigger factor, found in Rhodococcus jostii (strain RHA1).